The following is a 693-amino-acid chain: Elongation factor G (693 aa).

The tr-type G domain maps to 8 to 282 (EKTRNIGIMA…AVIDYLPSPL (275 aa)). GTP-binding positions include 17-24 (AHVDAGKT), 81-85 (DTPGH), and 135-138 (NKMD).

Belongs to the TRAFAC class translation factor GTPase superfamily. Classic translation factor GTPase family. EF-G/EF-2 subfamily.

It localises to the cytoplasm. Its function is as follows. Catalyzes the GTP-dependent ribosomal translocation step during translation elongation. During this step, the ribosome changes from the pre-translocational (PRE) to the post-translocational (POST) state as the newly formed A-site-bound peptidyl-tRNA and P-site-bound deacylated tRNA move to the P and E sites, respectively. Catalyzes the coordinated movement of the two tRNA molecules, the mRNA and conformational changes in the ribosome. This chain is Elongation factor G, found in Streptococcus pneumoniae (strain ATCC 700669 / Spain 23F-1).